The primary structure comprises 164 residues: Phosphopantetheine adenylyltransferase (164 aa).

Residue Ser-10 coordinates substrate. ATP is bound by residues 10 to 11 (SF) and His-18. The substrate site is built by Lys-42, Leu-74, and Arg-88. Residues 89 to 91 (GLR), Glu-99, and 124 to 130 (YSFLSSS) contribute to the ATP site.

The protein belongs to the bacterial CoaD family. As to quaternary structure, homohexamer. Requires Mg(2+) as cofactor.

The protein localises to the cytoplasm. The catalysed reaction is (R)-4'-phosphopantetheine + ATP + H(+) = 3'-dephospho-CoA + diphosphate. The protein operates within cofactor biosynthesis; coenzyme A biosynthesis; CoA from (R)-pantothenate: step 4/5. In terms of biological role, reversibly transfers an adenylyl group from ATP to 4'-phosphopantetheine, yielding dephospho-CoA (dPCoA) and pyrophosphate. The protein is Phosphopantetheine adenylyltransferase of Exiguobacterium sibiricum (strain DSM 17290 / CCUG 55495 / CIP 109462 / JCM 13490 / 255-15).